Consider the following 541-residue polypeptide: Arginine--tRNA ligase (541 aa).

The 'HIGH' region signature appears at 119-129; sequence ANPTGPLHIGH.

It belongs to the class-I aminoacyl-tRNA synthetase family. Monomer.

Its subcellular location is the cytoplasm. The catalysed reaction is tRNA(Arg) + L-arginine + ATP = L-arginyl-tRNA(Arg) + AMP + diphosphate. This chain is Arginine--tRNA ligase, found in Helicobacter pylori (strain Shi470).